A 144-amino-acid polypeptide reads, in one-letter code: Maximins 7/H13 (144 aa).

A signal peptide spans methionine 1–alanine 18. A propeptide spanning residues arginine 19–arginine 43 is cleaved from the precursor. Asparagine 70 is modified (asparagine amide). Positions threonine 74–arginine 123 are excised as a propeptide. Position 143 is a leucine amide (leucine 143).

This sequence belongs to the bombinin family. Expressed by the skin glands.

Its subcellular location is the secreted. In terms of biological role, maximin-7 shows antimicrobial activity against bacteria and against the fungus C.albicans. It has little hemolytic activity. Maximin-H13 shows antimicrobial activity against bacteria and against the fungus C.albicans. Shows strong hemolytic activity. This is Maximins 7/H13 from Bombina maxima (Giant fire-bellied toad).